Reading from the N-terminus, the 260-residue chain is Proansamycin X synthase (260 aa).

The active-site Acyl-thioester intermediate is the C73. Residues H111 and D126 contribute to the active site.

Belongs to the arylamine N-acetyltransferase family.

It functions in the pathway antibiotic biosynthesis; rifamycin B biosynthesis. In terms of biological role, catalyzes the release of the completed linear polyketide from the rif PKS by forming an intramolecular amide bond, in this way terminating polyketide assembly and forming the macrocyclic compound proansamycin X, an intermediate in the rifamycin B biosynthesis. This is Proansamycin X synthase (rifF) from Amycolatopsis mediterranei (strain S699) (Nocardia mediterranei).